The primary structure comprises 261 residues: Phosphatidylglycerol--prolipoprotein diacylglyceryl transferase (261 aa).

Helical transmembrane passes span 20–40, 54–74, and 94–114; these read LAIH…VWLA, IIDF…LYYV, and GGGA…VFSY. Arg-139 is a binding site for a 1,2-diacyl-sn-glycero-3-phospho-(1'-sn-glycerol). A run of 3 helical transmembrane segments spans residues 175 to 195, 205 to 225, and 235 to 255; these read MPTF…VMVF, GDIF…VEGM, and ARVS…LFIY.

It belongs to the Lgt family.

Its subcellular location is the cell membrane. It catalyses the reaction L-cysteinyl-[prolipoprotein] + a 1,2-diacyl-sn-glycero-3-phospho-(1'-sn-glycerol) = an S-1,2-diacyl-sn-glyceryl-L-cysteinyl-[prolipoprotein] + sn-glycerol 1-phosphate + H(+). It participates in protein modification; lipoprotein biosynthesis (diacylglyceryl transfer). Functionally, catalyzes the transfer of the diacylglyceryl group from phosphatidylglycerol to the sulfhydryl group of the N-terminal cysteine of a prolipoprotein, the first step in the formation of mature lipoproteins. This Lactococcus lactis subsp. lactis (strain IL1403) (Streptococcus lactis) protein is Phosphatidylglycerol--prolipoprotein diacylglyceryl transferase.